A 252-amino-acid polypeptide reads, in one-letter code: Imidazole glycerol phosphate synthase subunit HisF (252 aa).

Catalysis depends on residues aspartate 11 and aspartate 130.

This sequence belongs to the HisA/HisF family. In terms of assembly, heterodimer of HisH and HisF.

The protein resides in the cytoplasm. The catalysed reaction is 5-[(5-phospho-1-deoxy-D-ribulos-1-ylimino)methylamino]-1-(5-phospho-beta-D-ribosyl)imidazole-4-carboxamide + L-glutamine = D-erythro-1-(imidazol-4-yl)glycerol 3-phosphate + 5-amino-1-(5-phospho-beta-D-ribosyl)imidazole-4-carboxamide + L-glutamate + H(+). The protein operates within amino-acid biosynthesis; L-histidine biosynthesis; L-histidine from 5-phospho-alpha-D-ribose 1-diphosphate: step 5/9. Its function is as follows. IGPS catalyzes the conversion of PRFAR and glutamine to IGP, AICAR and glutamate. The HisF subunit catalyzes the cyclization activity that produces IGP and AICAR from PRFAR using the ammonia provided by the HisH subunit. The polypeptide is Imidazole glycerol phosphate synthase subunit HisF (Bacillus cereus (strain G9842)).